Here is a 276-residue protein sequence, read N- to C-terminus: DNA repair protein RecO (276 aa).

It belongs to the RecO family.

In terms of biological role, involved in DNA repair and RecF pathway recombination. The chain is DNA repair protein RecO from Mycobacterium sp. (strain JLS).